The chain runs to 418 residues: UDP-N-acetylglucosamine 1-carboxyvinyltransferase 1 (418 aa).

A phosphoenolpyruvate-binding site is contributed by 22-23; sequence KN. Position 94 (Arg94) interacts with UDP-N-acetyl-alpha-D-glucosamine. Cys118 functions as the Proton donor in the catalytic mechanism. Cys118 carries the post-translational modification 2-(S-cysteinyl)pyruvic acid O-phosphothioketal. Residues 123-127, Asp306, and Ile328 contribute to the UDP-N-acetyl-alpha-D-glucosamine site; that span reads RPIDL.

The protein belongs to the EPSP synthase family. MurA subfamily.

It localises to the cytoplasm. The enzyme catalyses phosphoenolpyruvate + UDP-N-acetyl-alpha-D-glucosamine = UDP-N-acetyl-3-O-(1-carboxyvinyl)-alpha-D-glucosamine + phosphate. The protein operates within cell wall biogenesis; peptidoglycan biosynthesis. Its function is as follows. Cell wall formation. Adds enolpyruvyl to UDP-N-acetylglucosamine. The sequence is that of UDP-N-acetylglucosamine 1-carboxyvinyltransferase 1 from Clostridium acetobutylicum (strain ATCC 824 / DSM 792 / JCM 1419 / IAM 19013 / LMG 5710 / NBRC 13948 / NRRL B-527 / VKM B-1787 / 2291 / W).